A 996-amino-acid chain; its full sequence is Cilia- and flagella-associated protein 251 (996 aa).

11 WD repeats span residues 73 to 114, 118 to 164, 168 to 211, 219 to 258, 282 to 319, 399 to 438, 445 to 485, 494 to 533, 547 to 593, 615 to 658, and 719 to 759; these read GHCN…PKKT, PHPN…EPCL, EFDR…KGFN, PSLKVLTQTVFIPDNTQVVTGTTDGHIIVWDISLIIEKVD, KGSNSINILKIQDNYLVIGSSNGSIRFYDFQYRIIAWF, SIVSPIIAMSCRPNSNVIGICCENGYLYEWNFQEKSSVLS, TDKE…WQNS, QGKPKVNMQVFSSDSKNLATMDADYAVSLFTIDHRQFDVN, IHHS…YSKQ, EQET…FKFC, and AHPD…LEQI. The tract at residues 971 to 996 is disordered; the sequence is DLEGEERDDNIEDQYEDEENEEYDQD.

The protein localises to the cell projection. It is found in the cilium. Its function is as follows. As component of a spoke-associated complex, regulates ciliary mobility by mediating a stable and functional assembly of the radial spoke 3 (RS3). This chain is Cilia- and flagella-associated protein 251, found in Tetrahymena thermophila (strain SB210).